The primary structure comprises 466 residues: Cysteine--tRNA ligase (466 aa).

A Zn(2+)-binding site is contributed by C27. Positions 29 to 39 (PTVYNYFHIGN) match the 'HIGH' region motif. Zn(2+)-binding residues include C207, H232, and E236. The short motif at 264 to 268 (KMSKS) is the 'KMSKS' region element. K267 is a binding site for ATP.

The protein belongs to the class-I aminoacyl-tRNA synthetase family. In terms of assembly, monomer. Requires Zn(2+) as cofactor.

It localises to the cytoplasm. It catalyses the reaction tRNA(Cys) + L-cysteine + ATP = L-cysteinyl-tRNA(Cys) + AMP + diphosphate. This is Cysteine--tRNA ligase from Clostridium novyi (strain NT).